We begin with the raw amino-acid sequence, 508 residues long: RanBP-type and C3HC4-type zinc finger-containing protein 1 (508 aa).

Position 1 is an N-acetylmethionine (Met-1). Residues 1–218 are interaction with IRF3; the sequence is MDEKTKKAEE…PGCEMCCRAR (218 aa). An interaction with TAB2 region spans residues 1 to 268; it reads MDEKTKKAEE…NYLQHVQLEQ (268 aa). Phosphoserine is present on Ser-50. The 65-residue stretch at 55–119 folds into the Ubiquitin-like domain; sequence IRLCVSVEDA…DQETLHSHGI (65 aa). The tract at residues 69-131 is interaction with RNF31; sequence VTIWLTVRPD…NGDSAYLYLL (63 aa). Residues 161–191 form a disordered region; sequence TLQPRGPLEPVLPKPRTHQETGQPDAAPESP. The RanBP2-type zinc finger occupies 188–220; sequence PESPPVGWQCPGCTFINKPTRPGCEMCCRARPE. Positions 231–260 form a coiled coil; the sequence is DEEERARLAGEEEALRQYEQRKQQQQEGNY. Positions 276-504 are TRIAD supradomain; it reads EPAECPVCYS…VNGIPCHPSC (229 aa). Zn(2+) contacts are provided by Cys-280, Cys-283, Cys-298, His-300, Cys-303, Cys-306, and Cys-321. The segment at 280–330 adopts an RING-type 1 zinc-finger fold; that stretch reads CPVCYSVLAPGEAVVLRECLHTFCRECLQGTIRNSQEAEVSCPFIDNTYSC. Residue Tyr-328 is modified to Phosphotyrosine. Zn(2+)-binding residues include Cys-330, Cys-369, Cys-374, Cys-389, Cys-392, Cys-397, Cys-400, His-404, Cys-409, Cys-445, and Cys-448. The segment at 349–409 adopts an IBR-type zinc-finger fold; that stretch reads QRFLDLGVSI…CKAIHERMNC (61 aa). The RING-type 2; atypical zinc finger occupies 445-474; the sequence is CPQCRIVVQKKDGCDWIRCTVCHTEICWVT. Residue Cys-458 is part of the active site. Zn(2+) contacts are provided by Cys-463 and Cys-466.

Belongs to the RBR family. Component of the LUBAC complex (linear ubiquitin chain assembly complex) which consists of SHARPIN, RBCK1 and RNF31. LUBAC has a MW of approximately 600 kDa suggesting a heteromultimeric assembly of its subunits. Interacts with beta-I-type (PRKCB1) and zeta-type protein kinase C (PRKCZ). Interacts with UBE2L3. Interacts with IREB2 only in iron-rich conditions. Associates with the TNF-R1 signaling complex (TNF-RSC) in a stimulation-dependent manner. Interacts with EYA1, TAB2, TAB3, MAP3K7 TRAF6 and RIPK1. Interacts with IRF3. Auto-ubiquitinated. Auto-ubiquitination leads to degradation by the proteasome. In terms of processing, phosphorylated. In vitro, phosphorylation inhibits auto-ubiquitination activity. In terms of tissue distribution, widely expressed.

The enzyme catalyses [E2 ubiquitin-conjugating enzyme]-S-ubiquitinyl-L-cysteine + [acceptor protein]-L-lysine = [E2 ubiquitin-conjugating enzyme]-L-cysteine + [acceptor protein]-N(6)-ubiquitinyl-L-lysine.. Its pathway is protein modification; protein ubiquitination. Its function is as follows. E3 ubiquitin-protein ligase, which accepts ubiquitin from specific E2 ubiquitin-conjugating enzymes, such as UBE2L3/UBCM4, and then transfers it to substrates. Functions as an E3 ligase for oxidized IREB2 and both heme and oxygen are necessary for IREB2 ubiquitination. Promotes ubiquitination of TAB2 and IRF3 and their degradation by the proteasome. Component of the LUBAC complex which conjugates linear ('Met-1'-linked) polyubiquitin chains to substrates and plays a key role in NF-kappa-B activation and regulation of inflammation. LUBAC conjugates linear polyubiquitin to IKBKG and RIPK1 and is involved in activation of the canonical NF-kappa-B and the JNK signaling pathways. Linear ubiquitination mediated by the LUBAC complex interferes with TNF-induced cell death and thereby prevents inflammation. LUBAC is recruited to the TNF-R1 signaling complex (TNF-RSC) following polyubiquitination of TNF-RSC components by BIRC2 and/or BIRC3 and to conjugate linear polyubiquitin to IKBKG and possibly other components contributing to the stability of the complex. The LUBAC complex is also involved in innate immunity by conjugating linear polyubiquitin chains at the surface of bacteria invading the cytosol to form the ubiquitin coat surrounding bacteria. LUBAC is not able to initiate formation of the bacterial ubiquitin coat, and can only promote formation of linear polyubiquitins on pre-existing ubiquitin. The bacterial ubiquitin coat acts as an 'eat-me' signal for xenophagy and promotes NF-kappa-B activation. Together with OTULIN, the LUBAC complex regulates the canonical Wnt signaling during angiogenesis. Binds polyubiquitin of different linkage types. This chain is RanBP-type and C3HC4-type zinc finger-containing protein 1 (Rbck1), found in Rattus norvegicus (Rat).